Reading from the N-terminus, the 308-residue chain is Glycerol-3-phosphate dehydrogenase [NAD(P)+] (308 aa).

Residues Trp-15, Arg-35, Arg-36, and Lys-83 each coordinate NADPH. The sn-glycerol 3-phosphate site is built by Lys-83 and Gly-111. Ser-115 provides a ligand contact to NADPH. Residues Lys-166, Asp-219, Ser-229, Arg-230, and Asn-231 each coordinate sn-glycerol 3-phosphate. Lys-166 functions as the Proton acceptor in the catalytic mechanism. Arg-230 is an NADPH binding site. Glu-256 provides a ligand contact to NADPH.

The protein belongs to the NAD-dependent glycerol-3-phosphate dehydrogenase family.

The protein resides in the cytoplasm. The enzyme catalyses sn-glycerol 3-phosphate + NAD(+) = dihydroxyacetone phosphate + NADH + H(+). It carries out the reaction sn-glycerol 3-phosphate + NADP(+) = dihydroxyacetone phosphate + NADPH + H(+). It functions in the pathway membrane lipid metabolism; glycerophospholipid metabolism. Its function is as follows. Catalyzes the reduction of the glycolytic intermediate dihydroxyacetone phosphate (DHAP) to sn-glycerol 3-phosphate (G3P), the key precursor for phospholipid synthesis. In Synechococcus elongatus (strain ATCC 33912 / PCC 7942 / FACHB-805) (Anacystis nidulans R2), this protein is Glycerol-3-phosphate dehydrogenase [NAD(P)+].